The following is a 140-amino-acid chain: Transmembrane protein 107 (140 aa).

Transmembrane regions (helical) follow at residues 7-27 (LVPSRFLTLLAHLVIVITLFW) and 53-73 (LVAALCLTLGLFAVELAGFLS). A glycan (N-linked (GlcNAc...) asparagine) is linked at Asn79. 2 helical membrane passes run 83–103 (SLLSIAAHCSASVALSFFIFE) and 113–133 (IFAFCSAFPAVTETALFIAVF).

Part of the tectonic-like complex (also named B9 complex). Interacts with TMEM237, TMEM231, MKS1 and TMEM216.

It is found in the membrane. The protein localises to the cell projection. It localises to the cilium. Plays a role in cilia formation and embryonic patterning. Requires for normal Sonic hedgehog (Shh) signaling in the neural tube and acts in combination with GLI2 and GLI3 to pattern ventral and intermediate neuronal cell types. During ciliogenesis regulates the ciliary transition zone localization of some MKS complex proteins. The sequence is that of Transmembrane protein 107 from Rattus norvegicus (Rat).